A 205-amino-acid polypeptide reads, in one-letter code: 2-dehydro-3-deoxy-6-phosphogalactonate aldolase (205 aa).

Residue Arg14 participates in 2-dehydro-3-deoxy-6-phospho-D-galactonate binding. Residue Glu37 is the Proton donor/acceptor of the active site. Positions 66, 126, 156, 176, and 177 each coordinate 2-dehydro-3-deoxy-6-phospho-D-galactonate. Residue Lys126 is the Schiff-base intermediate with substrate of the active site.

This sequence belongs to the KHG/KDPG aldolase family. Homotrimer.

It carries out the reaction 2-dehydro-3-deoxy-6-phospho-D-galactonate = D-glyceraldehyde 3-phosphate + pyruvate. It functions in the pathway carbohydrate acid metabolism; D-galactonate degradation; D-glyceraldehyde 3-phosphate and pyruvate from D-galactonate: step 3/3. Its function is as follows. Involved in the degradation of galactose via the DeLey-Doudoroff pathway. Catalyzes the reversible, stereospecific retro-aldol cleavage of 2-keto-3-deoxy-6-phosphogalactonate (KDPGal) to pyruvate and D-glyceraldehyde-3-phosphate. In the synthetic direction, it catalyzes the addition of pyruvate to electrophilic aldehydes with re-facial selectivity. It can use a limited number of aldehyde substrates, including D-glyceraldehyde-3-phosphate (natural substrate), D-glyceraldehyde, glycolaldehyde, 2-pyridinecarboxaldehyde, D-ribose, D-erythrose and D-threose. It efficiently catalyzes aldol addition only using pyruvate as the nucleophilic component and accepts both stereochemical configurations at C2 of the electrophile. This is 2-dehydro-3-deoxy-6-phosphogalactonate aldolase (dgoA) from Escherichia coli (strain K12).